Here is a 382-residue protein sequence, read N- to C-terminus: 2-carboxy-1,4-naphthoquinone phytyltransferase, chloroplastic (382 aa).

A chloroplast-targeting transit peptide spans 1–66 (MVNFVSLCDI…RRNLRVRPIF (66 aa)). The next 8 helical transmembrane spans lie at 99–119 (VALV…GLFL), 123–143 (YVTL…SNDV), 168–188 (TLAA…WTSL), 196–216 (ILLL…PFRL), 224–244 (PLCF…LLGS), 257–277 (VLSS…CSHF), 323–343 (ILPL…NLVS), and 361–381 (YYCV…LVIA).

It belongs to the MenA family. Type 2 subfamily.

Its subcellular location is the plastid. The protein localises to the chloroplast membrane. It catalyses the reaction 2-carboxy-1,4-naphthoquinone + phytyl diphosphate + H(+) = demethylphylloquinone + CO2 + diphosphate. Functionally, involved in the synthesis of phylloquinone (vitamin K1). Catalyzes the transfer of a prenyl chain to 2-carboxy-1,4-naphthoquinone. This Arabidopsis thaliana (Mouse-ear cress) protein is 2-carboxy-1,4-naphthoquinone phytyltransferase, chloroplastic (ABC4).